The primary structure comprises 687 residues: Ataxin-1-like (687 aa).

The segment covering 1–19 (MKPVHERSQECLPPKKRDL) has biased composition (basic and acidic residues). Disordered regions lie at residues 1 to 46 (MKPV…SEWS), 185 to 223 (ATPPPQAASPAQSFNKSSSATSPPGQLPHHSNTQPLDLA), and 261 to 294 (SALEAAAANGQRQRERNVRRESEALDSASSKGES). Residues 20 to 197 (PVTSEDMGRT…PPQAASPAQS (178 aa)) form an interaction with NCOR2 and ATXN1 region. The tract at residues 20-197 (PVTSEDMGRT…PPQAASPAQS (178 aa)) is self-association. Polar residues-rich tracts occupy residues 28–43 (RTTSCSTNHTPSSDAS) and 198–219 (FNKSSSATSPPGQLPHHSNTQP). Over residues 272–283 (RQRERNVRRESE) the composition is skewed to basic and acidic residues. The residue at position 282 (serine 282) is a Phosphoserine. Threonine 328 is modified (phosphothreonine). Residues 356 to 379 (DEPSPLNLSHHNLDHQGEGRGSAR) form a disordered region. Serine 359 is modified (phosphoserine). In terms of domain architecture, AXH spans 455 to 586 (PPPVTSSHLP…SISLQSLNSN (132 aa)). Positions 587 to 649 (SVSQASCAPP…PGAQACWPAP (63 aa)) are disordered.

This sequence belongs to the ATXN1 family. As to quaternary structure, homodimer. Interacts (via AXH domain) with NCOR2. Interacts with ATXN1 and CIC. Directly interacts with RBPJ; this interaction is disrupted in the presence of Notch intracellular domain. Competes with ATXN1 for RBPJ-binding. Found in a complex with CIC and ATXN1. Expressed in the cortex and hypothalamus (at protein level). Expressed in neuronal cells. Highly expressed in Purkinje cells of cerebellum.

It is found in the nucleus. Its subcellular location is the cell projection. The protein resides in the dendrite. Chromatin-binding factor that repress Notch signaling in the absence of Notch intracellular domain by acting as a CBF1 corepressor. Binds to the HEY promoter and might assist, along with NCOR2, RBPJ-mediated repression. Can suppress the cytotoxicity of ATXN1 in spinocerebellar ataxia type 1 (SCA1). In concert with CIC and ATXN1, involved in brain development. The polypeptide is Ataxin-1-like (Atxn1l) (Mus musculus (Mouse)).